A 473-amino-acid polypeptide reads, in one-letter code: 3-isopropylmalate dehydratase large subunit (473 aa).

[4Fe-4S] cluster is bound by residues cysteine 348, cysteine 413, and cysteine 416.

The protein belongs to the aconitase/IPM isomerase family. LeuC type 1 subfamily. Heterodimer of LeuC and LeuD. [4Fe-4S] cluster is required as a cofactor.

The catalysed reaction is (2R,3S)-3-isopropylmalate = (2S)-2-isopropylmalate. It functions in the pathway amino-acid biosynthesis; L-leucine biosynthesis; L-leucine from 3-methyl-2-oxobutanoate: step 2/4. Catalyzes the isomerization between 2-isopropylmalate and 3-isopropylmalate, via the formation of 2-isopropylmaleate. The chain is 3-isopropylmalate dehydratase large subunit from Parvibaculum lavamentivorans (strain DS-1 / DSM 13023 / NCIMB 13966).